The chain runs to 604 residues: Serine protease 56 (604 aa).

Residues 1 to 22 form the signal peptide; sequence MPLAMLLLLLLLLSPDSQTAHG. A disordered region spans residues 70 to 94; sequence CQGPGRPRPQAPLLQDPPEPVQCGE. Pro residues predominate over residues 75–89; it reads RPRPQAPLLQDPPEP. A glycan (N-linked (GlcNAc...) asparagine) is linked at Asn101. The Peptidase S1 domain maps to 109–341; sequence IVGGSTAPSG…FKDWLQEQMS (233 aa). Cys134 and Cys150 are joined by a disulfide. Catalysis depends on charge relay system residues His149 and Asp195. 3 disulfide bridges follow: Cys229–Cys296, Cys260–Cys275, and Cys286–Cys317. Ser290 (charge relay system) is an active-site residue. Disordered regions lie at residues 424–452 and 578–604; these read RPGL…PREQ and PQAP…PPVP.

Belongs to the peptidase S1 family. In terms of tissue distribution, expressed in the eye: present in the retina and in the optic nerve.

It is found in the endoplasmic reticulum membrane. Its function is as follows. Serine protease required during eye development. The protein is Serine protease 56 (Prss56) of Mus musculus (Mouse).